Reading from the N-terminus, the 202-residue chain is MAEEQEIVDSLSAEVNPDQKVDMEVETATPKAETGDEKREREETEEEENGGESKKQKVGEEEKSGPVKLGPKEFVTSVAMFDYFVKFLHFWPTDLDVNKYEHMVLLDLIKKGHSEPEKKIGGGIKTFQVRTHPMWKSRCFFLVREDDTADDFSFRKCVDQILPLPENMKTPGANGNGHGGGRGGGGGRRGGRGGGRGGRFRR.

2 disordered regions span residues 1–69 and 168–202; these read MAEE…PVKL and MKTPGANGNGHGGGRGGGGGRRGGRGGGRGGRFRR. At A2 the chain carries N-acetylalanine. Composition is skewed to basic and acidic residues over residues 33 to 42 and 51 to 65; these read ETGDEKRERE and GESKKQKVGEEEKSG. The segment covering 174–202 has biased composition (gly residues); the sequence is NGNGHGGGRGGGGGRRGGRGGGRGGRFRR.

Expressed in leaves, flowers and embryos at globular stage.

It is found in the nucleus. Functionally, may play a role in ribosome biogenesis and in determining the rate of cell division. Involved in a process essential for nuclear and nucleolar functions. The polypeptide is Protein EMBRYO DEFECTIVE 514 (Arabidopsis thaliana (Mouse-ear cress)).